The following is a 119-amino-acid chain: Holo-[acyl-carrier-protein] synthase (119 aa).

Mg(2+) is bound by residues aspartate 8 and glutamate 58.

This sequence belongs to the P-Pant transferase superfamily. AcpS family. The cofactor is Mg(2+).

The protein resides in the cytoplasm. The catalysed reaction is apo-[ACP] + CoA = holo-[ACP] + adenosine 3',5'-bisphosphate + H(+). Its function is as follows. Transfers the 4'-phosphopantetheine moiety from coenzyme A to a Ser of acyl-carrier-protein. This is Holo-[acyl-carrier-protein] synthase from Halalkalibacterium halodurans (strain ATCC BAA-125 / DSM 18197 / FERM 7344 / JCM 9153 / C-125) (Bacillus halodurans).